The following is a 397-amino-acid chain: S-adenosylmethionine synthase (397 aa).

Residue H16 coordinates ATP. Residue D18 coordinates Mg(2+). A K(+)-binding site is contributed by E44. Residues E57 and Q100 each contribute to the L-methionine site. Residues 100-110 (QSPDIAQGVNE) form a flexible loop region. ATP-binding positions include 175-177 (DAK), 242-243 (RF), D251, 257-258 (RK), A274, and K278. D251 lines the L-methionine pocket. L-methionine is bound at residue K282.

Belongs to the AdoMet synthase family. As to quaternary structure, homotetramer; dimer of dimers. Mg(2+) serves as cofactor. K(+) is required as a cofactor.

It is found in the cytoplasm. It carries out the reaction L-methionine + ATP + H2O = S-adenosyl-L-methionine + phosphate + diphosphate. Its pathway is amino-acid biosynthesis; S-adenosyl-L-methionine biosynthesis; S-adenosyl-L-methionine from L-methionine: step 1/1. Its function is as follows. Catalyzes the formation of S-adenosylmethionine (AdoMet) from methionine and ATP. The overall synthetic reaction is composed of two sequential steps, AdoMet formation and the subsequent tripolyphosphate hydrolysis which occurs prior to release of AdoMet from the enzyme. The chain is S-adenosylmethionine synthase from Streptococcus thermophilus (strain ATCC BAA-250 / LMG 18311).